The chain runs to 638 residues: Epithelial sodium channel subunit beta (638 aa).

The Cytoplasmic segment spans residues 1–50 (MPVKKYLLKCLHRLQKGPGYTYKELLVWYCNNTNTHGPKRIICEGPKKKA). Residues 51-71 (MWFLLTLLFACLVCWQWGVFI) traverse the membrane as a helical segment. The Extracellular portion of the chain corresponds to 72–530 (QTYLSWEVSV…GGQFGFWMGG (459 aa)). 9 disulfides stabilise this stretch: C98-C270, C182-C187, C194-C201, C247-C254, C359-C446, C384-C442, C388-C438, C397-C424, and C399-C413. 2 N-linked (GlcNAc...) asparagine glycosylation sites follow: N135 and N141. Residues 531 to 551 (SVLCLIEFGEIIIDFIWITVI) form a helical membrane-spanning segment. The Cytoplasmic portion of the chain corresponds to 552–638 (KLVASCKGLR…MESDSEVEAI (87 aa)). Positions 598–620 (NAEVYPDQQTLPIPGTPPPNYDS) are disordered. A PY motif; recruits WW domain-containing proteins and is thereby required for ubiquitination and inhibition of the channel by NEDD4 and NEDD4L motif is present at residues 614–618 (PPPNY). A phosphoserine mark is found at S631 and S633.

It belongs to the amiloride-sensitive sodium channel (TC 1.A.6) family. SCNN1B subfamily. As to quaternary structure, component of the heterotrimeric epithelial sodium channel (ENaC) composed of an alpha/SCNN1A, a beta/SCNN1B and a gamma/SCNN1G subunit. Interacts with WWP1 (via WW domains). Interacts with WWP2 (via WW domains). Interacts with the full-length immature form of PCSK9 (pro-PCSK9). Interacts (N-glycosylated) with BPIFA1; the interaction is direct and inhibits the proteolytic processing of SCNN1A and SCNN1G and the activation of ENaC. Ubiquitinated. Can be ubiquitinated at multiple sites and undergo monoubiquitination and polyubiquitination. Ubiquitination by NEDD4 or NEDD4L inhibits the ENaC channel through endocytosis, intracellular retention and degradation of its individual subunits. However, some studies could not confirm the ubiquitination of this subunit of the ENaC. In terms of processing, N-glycosylated. N-glycosylation is required for interaction with BPIFA1. Post-translationally, phosphorylated on serine and threonine residues. Aldosterone and insulin increase the basal level of phosphorylation. In terms of tissue distribution, expressed in lung and epididymis. In the caput region of the epididymis, expressed at the luminal and basolateral surfaces of the ducts and in the smooth muscle coat. In the caudal region of the epididymis, expressed along the luminal border but not continuously, in the smooth muscle coat, in the interstitial muscle tissue and in sperm in the caudal lumen.

The protein localises to the apical cell membrane. The protein resides in the cytoplasmic vesicle membrane. It carries out the reaction Na(+)(in) = Na(+)(out). Its activity is regulated as follows. Originally identified and characterized by its inhibition by the diuretic drug amiloride. Functionally, this is one of the three pore-forming subunits of the heterotrimeric epithelial sodium channel (ENaC), a critical regulator of sodium balance and fluid homeostasis. ENaC operates in epithelial tissues, where it mediates the electrodiffusion of sodium ions from extracellular fluid through the apical membrane of cells, with water following osmotically. It plays a key role in maintaining sodium homeostasis through electrogenic sodium reabsorption in the kidneys. This subunit is not essential for ENaC function in airway surface liquid homeostasis and proper mucus clearance. The polypeptide is Epithelial sodium channel subunit beta (Rattus norvegicus (Rat)).